Reading from the N-terminus, the 248-residue chain is Probable transcriptional regulatory protein Oant_1200 (248 aa).

This sequence belongs to the TACO1 family.

The protein localises to the cytoplasm. This is Probable transcriptional regulatory protein Oant_1200 from Brucella anthropi (strain ATCC 49188 / DSM 6882 / CCUG 24695 / JCM 21032 / LMG 3331 / NBRC 15819 / NCTC 12168 / Alc 37) (Ochrobactrum anthropi).